We begin with the raw amino-acid sequence, 415 residues long: Probable G-protein coupled receptor 19 (415 aa).

The Extracellular portion of the chain corresponds to 1–69; that stretch reads MVFAHRMDNS…LKPGEVATAS (69 aa). N-linked (GlcNAc...) asparagine glycans are attached at residues Asn-25 and Asn-52. The chain crosses the membrane as a helical span at residues 70 to 90; the sequence is IFFGILWLFSIFGNSLVCLVI. Residues 91–102 lie on the Cytoplasmic side of the membrane; sequence HRSRRTQSTTNY. Residues 103–123 traverse the membrane as a helical segment; it reads FVVSMACADLLISVASTPFVL. Topologically, residues 124-143 are extracellular; the sequence is LQFTTGRWTLGSATCKVVRY. Residues Cys-138 and Cys-210 are joined by a disulfide bond. A helical transmembrane segment spans residues 144-161; it reads FQYLTPGVQIYVLLSICI. The Cytoplasmic segment spans residues 162–182; sequence DRFYTIVYPLSFKVSREKAKK. Residues 183 to 203 form a helical membrane-spanning segment; that stretch reads MIAASWVFDAGFVTPVLFFYG. Over 204 to 221 the chain is Extracellular; that stretch reads SNWDSHCNYFLPSSWEGT. A helical membrane pass occupies residues 222-242; it reads AYTVIHFLVGFVIPSVLIILF. At 243-277 the chain is on the cytoplasmic side; it reads YQKVIKYIWRIGTDGRTVRRTMNIVPRTKVKTIKM. The chain crosses the membrane as a helical span at residues 278 to 298; it reads FLILNLLFLLSWLPFHVAQLW. The Extracellular portion of the chain corresponds to 299–309; the sequence is HPHEQDYKKSS. A helical transmembrane segment spans residues 310–325; sequence LVFTAITWISFSSSAS. The Cytoplasmic portion of the chain corresponds to 326 to 415; that stretch reads KPTLYSIYNA…INSNPPNTFV (90 aa).

The protein belongs to the G-protein coupled receptor 1 family. As to expression, abundant expression in the brain.

Its subcellular location is the cell membrane. G-protein coupled receptor that plays a role in the regulation of circadian rhythms and energy metabolism. Participates in maintaining proper circadian gene expression in the suprachiasmatic nucleus (SCN), the locus of the master circadian clock in the brain. May function as a coordinator of aging-associated metabolic dysfunction, stress response, DNA integrity management, and eventual senescence. Upon binding to adropin, modulates mitochondrial energy metabolism via the p44/42-PDK4 signaling pathway, influencing pyruvate dehydrogenase activity. In Homo sapiens (Human), this protein is Probable G-protein coupled receptor 19 (GPR19).